Reading from the N-terminus, the 347-residue chain is MTVPVRGFSLLRGRLGRAPALGRSTAPSVRAPGEPGSAFRGFRSSGVRHEAIIISGTEMAKHIQKEIQRGVESWVSLGNRRPHLSIILVGDNPASHTYVRNKIRAASAVGICSELILKPKDVSQEELLDVTDQLNMDPRVSGILVQLPLPDHVDERTICNGIAPEKDVDGFHIINIGRLCLDQHSLIPATASAVWEIIKRTGIQTFGKNVVVAGRSKNVGMPIAMLLHTDGEHERPGGDATVTIAHRYTPKEQLKIHTQLADIIIVAAGIPKLITSDMVKEGAAVIDVGINYVHDPVTGKTKLVGDVDFEAVKKKAGFITPVPGGVGPMTVAMLLKNTLLAAKKIIY.

Substrate-binding positions include 98-102 (YVRNK) and 145-147 (VQL). Residues 214–216 (GRS) and R247 each bind NAD(+). Residue 323-327 (PGGVG) participates in substrate binding.

Belongs to the tetrahydrofolate dehydrogenase/cyclohydrolase family. Mg(2+) is required as a cofactor. As to expression, isoform 1, isoform 4 and isoform 5 are expressed in brain and placenta.

Its subcellular location is the mitochondrion inner membrane. It catalyses the reaction (6R)-5,10-methylene-5,6,7,8-tetrahydrofolate + NAD(+) = (6R)-5,10-methenyltetrahydrofolate + NADH. The catalysed reaction is (6R)-5,10-methenyltetrahydrofolate + H2O = (6R)-10-formyltetrahydrofolate + H(+). The enzyme catalyses (6R)-5,10-methylene-5,6,7,8-tetrahydrofolate + NADP(+) = (6R)-5,10-methenyltetrahydrofolate + NADPH. Its pathway is one-carbon metabolism; tetrahydrofolate interconversion. In terms of biological role, bifunctional mitochondrial folate-interconverting enzyme that has both NAD/NADP-dependent methylenetetrahydrofolate dehydrogenase and methenyltetrahydrofolate cyclohydrolase activities. In Homo sapiens (Human), this protein is Bifunctional methylenetetrahydrofolate dehydrogenase/cyclohydrolase 2, mitochondrial.